Here is a 500-residue protein sequence, read N- to C-terminus: ATP synthase subunit alpha (500 aa).

169 to 176 (GDRQTGKT) serves as a coordination point for ATP.

Belongs to the ATPase alpha/beta chains family. F-type ATPases have 2 components, CF(1) - the catalytic core - and CF(0) - the membrane proton channel. CF(1) has five subunits: alpha(3), beta(3), gamma(1), delta(1), epsilon(1). CF(0) has three main subunits: a(1), b(2) and c(9-12). The alpha and beta chains form an alternating ring which encloses part of the gamma chain. CF(1) is attached to CF(0) by a central stalk formed by the gamma and epsilon chains, while a peripheral stalk is formed by the delta and b chains.

It localises to the cell inner membrane. It catalyses the reaction ATP + H2O + 4 H(+)(in) = ADP + phosphate + 5 H(+)(out). Functionally, produces ATP from ADP in the presence of a proton gradient across the membrane. The alpha chain is a regulatory subunit. This is ATP synthase subunit alpha from Fusobacterium nucleatum subsp. nucleatum (strain ATCC 25586 / DSM 15643 / BCRC 10681 / CIP 101130 / JCM 8532 / KCTC 2640 / LMG 13131 / VPI 4355).